We begin with the raw amino-acid sequence, 264 residues long: Hydroxyethylthiazole kinase (264 aa).

Residue methionine 55 participates in substrate binding. Residues arginine 130 and serine 176 each coordinate ATP. Glycine 203 contributes to the substrate binding site.

Belongs to the Thz kinase family. Mg(2+) is required as a cofactor.

The enzyme catalyses 5-(2-hydroxyethyl)-4-methylthiazole + ATP = 4-methyl-5-(2-phosphooxyethyl)-thiazole + ADP + H(+). It participates in cofactor biosynthesis; thiamine diphosphate biosynthesis; 4-methyl-5-(2-phosphoethyl)-thiazole from 5-(2-hydroxyethyl)-4-methylthiazole: step 1/1. Catalyzes the phosphorylation of the hydroxyl group of 4-methyl-5-beta-hydroxyethylthiazole (THZ). This is Hydroxyethylthiazole kinase from Leptospira borgpetersenii serovar Hardjo-bovis (strain JB197).